Here is a 179-residue protein sequence, read N- to C-terminus: UPF0316 protein Ping_1367 (179 aa).

The next 2 helical transmembrane spans lie at 28-48 (FLAS…SAQV) and 55-75 (WYLA…GISI).

It belongs to the UPF0316 family.

It localises to the cell membrane. This is UPF0316 protein Ping_1367 from Psychromonas ingrahamii (strain DSM 17664 / CCUG 51855 / 37).